The primary structure comprises 258 residues: Development-specific 25 kDa protein (258 aa).

V10–L34 serves as a coordination point for NAD(+). Position 138 (S138) interacts with substrate. Y151 (proton acceptor) is an active-site residue.

The protein belongs to the short-chain dehydrogenases/reductases (SDR) family.

This chain is Development-specific 25 kDa protein, found in Sarcophaga peregrina (Flesh fly).